The chain runs to 263 residues: Thiamine thiazole synthase (263 aa).

NAD(+) contacts are provided by residues Ser36, 55–56 (ER), Gly63, Val127, and 157–159 (HVD). Positions 159 and 174 each coordinate Fe cation. Met228 contacts NAD(+). Arg238 contributes to the glycine binding site.

It belongs to the THI4 family. Homooctamer; tetramer of dimers. Fe(2+) is required as a cofactor.

It catalyses the reaction hydrogen sulfide + glycine + NAD(+) = ADP-5-ethyl-4-methylthiazole-2-carboxylate + nicotinamide + 3 H2O + H(+). The protein operates within cofactor biosynthesis; thiamine diphosphate biosynthesis. Its function is as follows. Involved in the biosynthesis of the thiazole moiety of thiamine. Catalyzes the conversion of NAD and glycine to adenosine diphosphate 5-(2-hydroxyethyl)-4-methylthiazole-2-carboxylate (ADT), an adenylated thiazole intermediate, using free sulfide as a source of sulfur. The protein is Thiamine thiazole synthase of Solidesulfovibrio magneticus (strain ATCC 700980 / DSM 13731 / RS-1) (Desulfovibrio magneticus).